The sequence spans 180 residues: Crossover junction endodeoxyribonuclease RuvC (180 aa).

Residues aspartate 7, glutamate 66, and aspartate 138 contribute to the active site. Residues aspartate 7, glutamate 66, and aspartate 138 each contribute to the Mg(2+) site.

The protein belongs to the RuvC family. Homodimer which binds Holliday junction (HJ) DNA. The HJ becomes 2-fold symmetrical on binding to RuvC with unstacked arms; it has a different conformation from HJ DNA in complex with RuvA. In the full resolvosome a probable DNA-RuvA(4)-RuvB(12)-RuvC(2) complex forms which resolves the HJ. Requires Mg(2+) as cofactor.

Its subcellular location is the cytoplasm. It carries out the reaction Endonucleolytic cleavage at a junction such as a reciprocal single-stranded crossover between two homologous DNA duplexes (Holliday junction).. The RuvA-RuvB-RuvC complex processes Holliday junction (HJ) DNA during genetic recombination and DNA repair. Endonuclease that resolves HJ intermediates. Cleaves cruciform DNA by making single-stranded nicks across the HJ at symmetrical positions within the homologous arms, yielding a 5'-phosphate and a 3'-hydroxyl group; requires a central core of homology in the junction. The consensus cleavage sequence is 5'-(A/T)TT(C/G)-3'. Cleavage occurs on the 3'-side of the TT dinucleotide at the point of strand exchange. HJ branch migration catalyzed by RuvA-RuvB allows RuvC to scan DNA until it finds its consensus sequence, where it cleaves and resolves the cruciform DNA. This Paraburkholderia xenovorans (strain LB400) protein is Crossover junction endodeoxyribonuclease RuvC.